Reading from the N-terminus, the 350-residue chain is THUMP domain-containing protein 1 (350 aa).

The span at 1-10 (MATTAQQSPQ) shows a compositional bias: polar residues. Disordered stretches follow at residues 1–42 (MATT…LEPG) and 75–96 (PEKFIDKDQQPSGSEGEDDDAE). Residue Ala2 is modified to N-acetylalanine. Phosphoserine is present on residues Ser8, Ser86, Ser88, and Ser119. One can recognise a THUMP domain in the interval 147–254 (DMYKTKKKKT…KAVCCLSVVK (108 aa)). Ser270 bears the Phosphoserine mark. Residues 270–292 (SAKDSQPHPKLGNGKEAKLEPDS) are compositionally biased toward basic and acidic residues. Residues 270-350 (SAKDSQPHPK…VPKTNENELS (81 aa)) form a disordered region.

This sequence belongs to the THUMPD1 family. In terms of assembly, interacts with NAT10. Binds tRNA.

In terms of biological role, functions as a tRNA-binding adapter to mediate NAT10-dependent tRNA acetylation modifying cytidine to N4-acetylcytidine (ac4C). This chain is THUMP domain-containing protein 1 (Thumpd1), found in Mus musculus (Mouse).